The primary structure comprises 40 residues: Photosystem II reaction center protein L (40 aa).

A helical membrane pass occupies residues 19–39 (SLFLGLLLVFVLGILFSSYFF).

It belongs to the PsbL family. In terms of assembly, PSII is composed of 1 copy each of membrane proteins PsbA, PsbB, PsbC, PsbD, PsbE, PsbF, PsbH, PsbI, PsbJ, PsbK, PsbL, PsbM, PsbT, PsbX, PsbY, PsbZ, Psb30/Ycf12, peripheral proteins PsbO, CyanoQ (PsbQ), PsbU, PsbV and a large number of cofactors. It forms dimeric complexes.

The protein resides in the cellular thylakoid membrane. In terms of biological role, one of the components of the core complex of photosystem II (PSII). PSII is a light-driven water:plastoquinone oxidoreductase that uses light energy to abstract electrons from H(2)O, generating O(2) and a proton gradient subsequently used for ATP formation. It consists of a core antenna complex that captures photons, and an electron transfer chain that converts photonic excitation into a charge separation. This subunit is found at the monomer-monomer interface and is required for correct PSII assembly and/or dimerization. The protein is Photosystem II reaction center protein L of Synechococcus elongatus (strain ATCC 33912 / PCC 7942 / FACHB-805) (Anacystis nidulans R2).